A 469-amino-acid polypeptide reads, in one-letter code: Glutamate--tRNA ligase 1 (469 aa).

Positions 11–21 (PSPTGHLHLGG) match the 'HIGH' region motif. A 'KMSKS' region motif is present at residues 238 to 242 (KLSKR). Lys241 is an ATP binding site.

The protein belongs to the class-I aminoacyl-tRNA synthetase family. Glutamate--tRNA ligase type 1 subfamily. As to quaternary structure, monomer.

Its subcellular location is the cytoplasm. It catalyses the reaction tRNA(Glu) + L-glutamate + ATP = L-glutamyl-tRNA(Glu) + AMP + diphosphate. Functionally, catalyzes the attachment of glutamate to tRNA(Glu) in a two-step reaction: glutamate is first activated by ATP to form Glu-AMP and then transferred to the acceptor end of tRNA(Glu). This Ehrlichia canis (strain Jake) protein is Glutamate--tRNA ligase 1.